A 414-amino-acid chain; its full sequence is Probable mannose-1-phosphate guanyltransferase (414 aa).

Belongs to the transferase hexapeptide repeat family.

The protein resides in the cytoplasm. It is found in the nucleus. The catalysed reaction is alpha-D-mannose 1-phosphate + GTP + H(+) = GDP-alpha-D-mannose + diphosphate. Its pathway is nucleotide-sugar biosynthesis; GDP-alpha-D-mannose biosynthesis; GDP-alpha-D-mannose from alpha-D-mannose 1-phosphate (GTP route): step 1/1. Involved in cell wall synthesis where it is required for glycosylation. In Schizosaccharomyces pombe (strain 972 / ATCC 24843) (Fission yeast), this protein is Probable mannose-1-phosphate guanyltransferase.